The chain runs to 156 residues: MKCPYCGHLDNKVIDSRINKDATITRRRRSCLACDQRFTTYERLEVMFPMLVKKDGRREAWDRHKLVVGIEKACEKRAVSRDKIDEFVDDIEHMLQDYGAKEISSSIVGEWVMERLPALDEVAYVRFASVYRQFKDVDEFMSELKNLLDARGGGDD.

A zinc finger lies at 3 to 34 (CPYCGHLDNKVIDSRINKDATITRRRRSCLAC). One can recognise an ATP-cone domain in the interval 49–139 (PMLVKKDGRR…VYRQFKDVDE (91 aa)).

The protein belongs to the NrdR family. The cofactor is Zn(2+).

Its function is as follows. Negatively regulates transcription of bacterial ribonucleotide reductase nrd genes and operons by binding to NrdR-boxes. The polypeptide is Transcriptional repressor NrdR (Desulfotalea psychrophila (strain LSv54 / DSM 12343)).